We begin with the raw amino-acid sequence, 409 residues long: Glycosaminoglycan xylosylkinase (409 aa).

Residues 1-6 (MKLKQR) are Cytoplasmic-facing. Residues 7–25 (VVVLCAVLFLLGLAKVFLL) traverse the membrane as a helical; Signal-anchor for type II membrane protein segment. At 26 to 409 (DGGEGSAASR…IEDRMNLPHP (384 aa)) the chain is on the lumenal side. Residues Gln107 and Lys123 each contribute to the ATP site. Position 142 (Asp142) interacts with Mn(2+). Asn193 carries an N-linked (GlcNAc...) asparagine glycan. Disulfide bonds link Cys196–Cys211 and Cys201–Cys204. 222-225 (TLWL) contributes to the ATP binding site. Disulfide bonds link Cys257-Cys331 and Cys332-Cys389. Residue Asp289 is part of the active site. Positions 294 and 309 each coordinate ATP. Asp309 serves as a coordination point for Mn(2+).

The protein belongs to the FAM20 family. The cofactor is Mn(2+).

The protein localises to the golgi apparatus membrane. The enzyme catalyses 3-O-(beta-D-galactosyl-(1-&gt;3)-beta-D-galactosyl-(1-&gt;4)-beta-D-xylosyl)-L-seryl-[protein] + ATP = 3-O-(beta-D-galactosyl-(1-&gt;3)-beta-D-galactosyl-(1-&gt;4)-beta-D-2-O-phosphoxylosyl)-L-seryl-[protein] + ADP + H(+). In terms of biological role, responsible for the 2-O-phosphorylation of xylose in the glycosaminoglycan-protein linkage region of proteoglycans thereby regulating the amount of mature GAG chains. Sulfated glycosaminoglycans (GAGs), including heparan sulfate and chondroitin sulfate, are synthesized on the so-called common GAG-protein linkage region (GlcUAbeta1-3Galbeta1-3Galbeta1-4Xylbeta1-O-Ser) of core proteins, which is formed by the stepwise addition of monosaccharide residues by the respective specific glycosyltransferases. The chain is Glycosaminoglycan xylosylkinase from Danio rerio (Zebrafish).